The primary structure comprises 271 residues: Cytosolic Fe-S cluster assembly factor NUBP2 (271 aa).

Position 1 is an N-acetylmethionine (Met1). 22 to 29 (GKGGVGKS) serves as a coordination point for ATP. [4Fe-4S] cluster-binding residues include Cys196 and Cys199.

Belongs to the Mrp/NBP35 ATP-binding proteins family. NUBP2/CFD1 subfamily. As to quaternary structure, heterotetramer of 2 NUBP1 and 2 NUBP2 chains. Interacts with KIFC1. Interacts with NUBP1. The cofactor is [4Fe-4S] cluster.

It is found in the nucleus. Its subcellular location is the cytoplasm. The protein localises to the cytoskeleton. It localises to the microtubule organizing center. The protein resides in the centrosome. It is found in the cilium axoneme. Its subcellular location is the centriole. Its function is as follows. Component of the cytosolic iron-sulfur (Fe/S) protein assembly (CIA) machinery. Required for maturation of extramitochondrial Fe-S proteins. The NUBP1-NUBP2 heterotetramer forms a Fe-S scaffold complex, mediating the de novo assembly of an Fe-S cluster and its transfer to target apoproteins. Negatively regulates cilium formation and structure. In Bos taurus (Bovine), this protein is Cytosolic Fe-S cluster assembly factor NUBP2.